Reading from the N-terminus, the 87-residue chain is UPF0250 protein NT01EI_2946 (87 aa).

It belongs to the UPF0250 family.

This Edwardsiella ictaluri (strain 93-146) protein is UPF0250 protein NT01EI_2946.